Reading from the N-terminus, the 137-residue chain is Peptide methionine sulfoxide reductase MsrB (137 aa).

Positions 7–129 constitute a MsrB domain; sequence AEELKKNLSD…NSASLRFTDG (123 aa). Residues cysteine 46, cysteine 49, cysteine 95, and cysteine 98 each coordinate Zn(2+). Cysteine 118 (nucleophile) is an active-site residue.

It belongs to the MsrB Met sulfoxide reductase family. Zn(2+) is required as a cofactor.

It carries out the reaction L-methionyl-[protein] + [thioredoxin]-disulfide + H2O = L-methionyl-(R)-S-oxide-[protein] + [thioredoxin]-dithiol. This Shigella dysenteriae serotype 1 (strain Sd197) protein is Peptide methionine sulfoxide reductase MsrB.